Here is a 160-residue protein sequence, read N- to C-terminus: Aspartate carbamoyltransferase regulatory chain (160 aa).

Zn(2+) contacts are provided by cysteine 110, cysteine 115, cysteine 140, and cysteine 143.

The protein belongs to the PyrI family. Contains catalytic and regulatory chains. Zn(2+) serves as cofactor.

Functionally, involved in allosteric regulation of aspartate carbamoyltransferase. This chain is Aspartate carbamoyltransferase regulatory chain, found in Hyperthermus butylicus (strain DSM 5456 / JCM 9403 / PLM1-5).